A 552-amino-acid polypeptide reads, in one-letter code: Probable inorganic phosphate transporter 1-10 (552 aa).

Over 1-22 (MAPIGVLTALDQARTQYYHFKA) the chain is Cytoplasmic. The helical transmembrane segment at 23 to 43 (IVIAGMGLFTDSYDLFCIAPV) threads the bilayer. Topologically, residues 44 to 68 (MKIVGRVYYSDGGARPGVTPPAVVS) are extracellular. A helical transmembrane segment spans residues 69–89 (ATVGVALLGAVIGNVVFGALG). The Cytoplasmic portion of the chain corresponds to 90 to 96 (DRVGRRR). A helical transmembrane segment spans residues 97–117 (VYGACLLLMVCSSVGSGFSVC). At 118 to 123 (RTRRCA) the chain is on the extracellular side. Residues 124 to 144 (LASLCFFRFLLGVGVGGDYPL) traverse the membrane as a helical segment. The Cytoplasmic portion of the chain corresponds to 145 to 158 (SATIMSEFANRRTR). The chain crosses the membrane as a helical span at residues 159–179 (GAFIAAVFSMQGFGILASSAV). Residues 180-203 (TMAVAAAFDHYTGYPAPLDTPECA) are Extracellular-facing. A helical membrane pass occupies residues 204 to 224 (DLAWRIILMAGAVPAALTYYW). The Cytoplasmic segment spans residues 225 to 295 (RMSMPETARY…RRFVRQHGRD (71 aa)). The chain crosses the membrane as a helical span at residues 296–316 (LFACAAAWFLLDIPYYSSTLF). Residues 317-342 (QSQIYRPLFPAPGLINAFQEAFNVAK) are Extracellular-facing. The chain crosses the membrane as a helical span at residues 343 to 363 (FQAVIAVASTIPGYFVAVLLI). Residues 364 to 369 (DRVGRR) lie on the Cytoplasmic side of the membrane. A helical membrane pass occupies residues 370-390 (CLQMAGFLLMAVFLFALAGPY). The Extracellular segment spans residues 391–397 (DGYWRDH). The chain crosses the membrane as a helical span at residues 398 to 418 (GAHAGYIVLYSLTFFSANLGP). Over 419–439 (NTTTFILPAELFPARFRSTCH) the chain is Cytoplasmic. The chain crosses the membrane as a helical span at residues 440 to 460 (GLSGAAGKLGALVGSIGFLWA). Topologically, residues 461-473 (SQQKDGAAAGHLP) are extracellular. The helical transmembrane segment at 474-494 (GIGMMYALFVLGGICLLGLAL) threads the bilayer. At 495–552 (TYVFTPETMMRSLEENESDRAQTQVGDGGSDTEAAKSPASMASSHLSMSPILPARVSV) the chain is on the cytoplasmic side. Residues 507–540 (LEENESDRAQTQVGDGGSDTEAAKSPASMASSHL) form a disordered region.

Belongs to the major facilitator superfamily. Phosphate:H(+) symporter (TC 2.A.1.9) family. In terms of tissue distribution, expressed at low levels in roots.

Its subcellular location is the membrane. High-affinity transporter for external inorganic phosphate. The polypeptide is Probable inorganic phosphate transporter 1-10 (PHT1-10) (Oryza sativa subsp. japonica (Rice)).